Reading from the N-terminus, the 311-residue chain is Ribosomal RNA small subunit methyltransferase H (311 aa).

Residues 32 to 34 (AGH), aspartate 52, phenylalanine 79, aspartate 100, and glutamine 107 each bind S-adenosyl-L-methionine.

Belongs to the methyltransferase superfamily. RsmH family.

It localises to the cytoplasm. The catalysed reaction is cytidine(1402) in 16S rRNA + S-adenosyl-L-methionine = N(4)-methylcytidine(1402) in 16S rRNA + S-adenosyl-L-homocysteine + H(+). Specifically methylates the N4 position of cytidine in position 1402 (C1402) of 16S rRNA. This is Ribosomal RNA small subunit methyltransferase H from Staphylococcus aureus (strain COL).